We begin with the raw amino-acid sequence, 593 residues long: METPPLPPACTKQGHQKPLDSKDENPEKHCPLTVNPWHMKKAFKVMNELRSQNLLCDVTIVAEDMEIPAHRVVLAACSPYFHAMFTGEMSESRAKRVRIKEVDGWTLRMLVDYVYTAEIQVTEENVQVLLPAAGLLQLQDVKKTCCEFLESQLHPVNCLGIRAFADMHACTDLLNKANTYAEQHFADVVLSEEFLNLGIEQVCSLISSDKLTISSEEKVFEAVIAWVNHDKDVRQEFMARLMEHVRLPLLPREYLVQRVEEEALVKNSSACKDYLIEAMKYHLLPTEQRMLMKSVRTRLRTPMNLPKLMVVVGGQAPKAIRSVECYDFKEERWHQVAELPSRRCRAGMVYMAGLVFAVGGFNGSLRVRTVDSYDPVKDQWTSVANMRDRRSTLGAAVLNGLLYAVGGFDGSTGLSSVEAYNIKSNEWFHVAPMNTRRSSVGVGVVGGLLYAVGGYDGASRQCLSTVECYNATANEWTYIAEMSTRRSGAGVGVLNNLLYAVGGHDGPLVRKSVEVYDPTTNAWRQVADMNMCRRNAGVCAVNGLLYVVGGDDGSCNLASVEYYNPTTDKWTVVSSCMSTGRSYAGVTVIDKPL.

The disordered stretch occupies residues 1–29; it reads METPPLPPACTKQGHQKPLDSKDENPEKH. Residues 17–29 show a composition bias toward basic and acidic residues; it reads KPLDSKDENPEKH. The region spanning 56-123 is the BTB domain; that stretch reads CDVTIVAEDM…VYTAEIQVTE (68 aa). Kelch repeat units follow at residues 308–353, 354–400, 402–447, 449–496, 497–543, and 545–591; these read LMVV…YMAG, LVFA…VLNG, LYAV…VVGG, LYAV…VLNN, LLYA…AVNG, and LYVV…VIDK.

Component of the BCR(KLHL2) E3 ubiquitin ligase complex, at least composed of CUL3 and KLHL2 and RBX1. Binds actin. Interacts with KLHL12. Interacts (via N-terminus) with FYN (via SH3 domain).

It is found in the cytoplasm. The protein localises to the cytoskeleton. It localises to the cell projection. Its subcellular location is the ruffle. The protein resides in the lamellipodium. It is found in the cytosol. It participates in protein modification; protein ubiquitination. Its function is as follows. Substrate-specific adapter of a BCR (BTB-CUL3-RBX1) E3 ubiquitin ligase complex that mediates the ubiquitination of target proteins, such as NPTXR, WNK1, WNK3 and WNK4, leading most often to their proteasomal degradation. The BCR(KLHL2) complex catalyzes ubiquitination and degradation of NPTXR. Responsible for degradative ubiquitination of the WNK kinases WNK1, WNK3 and WNK4. Plays a role in the reorganization of the actin cytoskeleton. Promotes growth of cell projections in oligodendrocyte precursors. This chain is Kelch-like protein 2, found in Mus musculus (Mouse).